Here is a 405-residue protein sequence, read N- to C-terminus: MKILVLNAGSSTQKSCLYDLTGDTLPQAPPKPIWKGDIDWTIATDHGLLEIKANGVEKKLNLSADDHLKGMSQMLDSLVQGETKVIDDLSEIEIVGHRVVHGGLNYTQATLITQEVKQTIADLIPLAPTHNPAHLEGIETVEKLLGNVPQLAVFDTAFHSTLPLEVAAYPLPYEWLEKGLRRYGFHGISHQYCVHRAAELLGKPLNSLKLINCHLGNGCSLAAVKDGISINTTMGFTPLEGLMMGSRSGSIDPEIPIFLIRDHGFTPEDVITVLNKKSGLKGVSGVSSDLRAIQKAIQEGNEKAQLAFKMYIHRLRFYIGAMLASLGGLDALIFTAGVGENSSEVREQACEAFGFLGLKLDQAKNESRPVDEDIATPDSKVRVLVIHTEEDWAIAKECWHQLTQK.

Residue asparagine 7 participates in Mg(2+) binding. Lysine 14 contacts ATP. Arginine 98 provides a ligand contact to substrate. Aspartate 155 functions as the Proton donor/acceptor in the catalytic mechanism. ATP is bound by residues 214–218 (HLGNG), 289–291 (DLR), and 337–341 (GVGEN). Glutamate 390 contacts Mg(2+).

The protein belongs to the acetokinase family. As to quaternary structure, homodimer. It depends on Mg(2+) as a cofactor. Mn(2+) is required as a cofactor.

It is found in the cytoplasm. It carries out the reaction acetate + ATP = acetyl phosphate + ADP. Its pathway is metabolic intermediate biosynthesis; acetyl-CoA biosynthesis; acetyl-CoA from acetate: step 1/2. Its function is as follows. Catalyzes the formation of acetyl phosphate from acetate and ATP. Can also catalyze the reverse reaction. The polypeptide is Acetate kinase (Gloeothece citriformis (strain PCC 7424) (Cyanothece sp. (strain PCC 7424))).